We begin with the raw amino-acid sequence, 332 residues long: uncharacterized protein (332 aa).

A helical membrane pass occupies residues 27-47 (CAIVFLCVLLILPFLSCCTSL).

It localises to the membrane. This is an uncharacterized protein from Treponema pallidum (strain Nichols).